The following is a 565-amino-acid chain: Coiled-coil domain-containing protein 17 (565 aa).

Residues 58-87 form a disordered region; sequence IMAQEKSRDQEASTSALKRLTEETAGSPGE. 2 coiled-coil regions span residues 97 to 160 and 219 to 271; these read ARRM…TLGA and LQLQ…KVLS.

This chain is Coiled-coil domain-containing protein 17 (Ccdc17), found in Mus musculus (Mouse).